A 240-amino-acid polypeptide reads, in one-letter code: HTH-type transcriptional repressor STM4068 (240 aa).

An HTH gntR-type domain is found at 9 to 77 (TPLYKQLFFI…RGSGSVVCSV (69 aa)). The segment at residues 37–56 (QKEIARSYNVSLIVVKQAWS) is a DNA-binding region (H-T-H motif).

Its function is as follows. Represses the expression of the STM4065-STM4067 operon. This Salmonella typhimurium (strain LT2 / SGSC1412 / ATCC 700720) protein is HTH-type transcriptional repressor STM4068.